Consider the following 437-residue polypeptide: Acyl-coenzyme A thioesterase 2, chloroplastic (437 aa).

A chloroplast-targeting transit peptide spans 1-13; sequence MDLSSSPNHPITV. 2 HotDog ACOT-type domains span residues 89 to 211 and 287 to 404; these read ILYN…RDSK and RDTR…RPEA.

The protein belongs to the acyl coenzyme A hydrolase family. As to expression, mostly expressed at low levels in glandular trichomes (lupulin glands), and, to a lower extent, in stems, leaves, flowers and cones.

It is found in the plastid. It localises to the chloroplast. Its function is as follows. Acyl-CoA thioesterases are a group of enzymes that catalyze the hydrolysis of acyl-CoAs to the free fatty acid and coenzyme A (CoASH), providing the potential to regulate intracellular levels of acyl-CoAs, free fatty acids and CoASH. The chain is Acyl-coenzyme A thioesterase 2, chloroplastic from Humulus lupulus (European hop).